The sequence spans 534 residues: CTP synthase (534 aa).

The interval 1–267 (MTKYIFVTGG…DQIVCDHLKL (267 aa)) is amidoligase domain. Ser13 contacts CTP. UTP is bound at residue Ser13. 14–19 (SIGKGI) lines the ATP pocket. L-glutamine is bound at residue Tyr54. Asp71 is a binding site for ATP. Mg(2+) is bound by residues Asp71 and Glu141. Residues 148 to 150 (DIE), 188 to 193 (KTKPTQ), and Lys224 each bind CTP. UTP is bound by residues 188–193 (KTKPTQ) and Lys224. ATP is bound at residue 240–242 (RDV). A Glutamine amidotransferase type-1 domain is found at 292-534 (KIALVGKYVE…FVTAAIKNSN (243 aa)). Gly354 provides a ligand contact to L-glutamine. Cys381 acts as the Nucleophile; for glutamine hydrolysis in catalysis. L-glutamine contacts are provided by residues 382–385 (LGMQ), Glu405, and Arg463. Active-site residues include His508 and Glu510.

It belongs to the CTP synthase family. In terms of assembly, homotetramer.

The enzyme catalyses UTP + L-glutamine + ATP + H2O = CTP + L-glutamate + ADP + phosphate + 2 H(+). It catalyses the reaction L-glutamine + H2O = L-glutamate + NH4(+). The catalysed reaction is UTP + NH4(+) + ATP = CTP + ADP + phosphate + 2 H(+). It functions in the pathway pyrimidine metabolism; CTP biosynthesis via de novo pathway; CTP from UDP: step 2/2. With respect to regulation, allosterically activated by GTP, when glutamine is the substrate; GTP has no effect on the reaction when ammonia is the substrate. The allosteric effector GTP functions by stabilizing the protein conformation that binds the tetrahedral intermediate(s) formed during glutamine hydrolysis. Inhibited by the product CTP, via allosteric rather than competitive inhibition. Functionally, catalyzes the ATP-dependent amination of UTP to CTP with either L-glutamine or ammonia as the source of nitrogen. Regulates intracellular CTP levels through interactions with the four ribonucleotide triphosphates. This Streptococcus pyogenes serotype M18 (strain MGAS8232) protein is CTP synthase.